Reading from the N-terminus, the 486-residue chain is Cysteine--tRNA ligase (486 aa).

Cys29 contributes to the Zn(2+) binding site. The 'HIGH' region signature appears at 31–41; sequence VTVYDYCHLGH. Zn(2+)-binding residues include Cys214, His239, and Glu243. Residues 271–275 carry the 'KMSKS' region motif; that stretch reads KMSKS. Lys274 contacts ATP.

It belongs to the class-I aminoacyl-tRNA synthetase family. In terms of assembly, monomer. It depends on Zn(2+) as a cofactor.

The protein localises to the cytoplasm. It catalyses the reaction tRNA(Cys) + L-cysteine + ATP = L-cysteinyl-tRNA(Cys) + AMP + diphosphate. This Nostoc sp. (strain PCC 7120 / SAG 25.82 / UTEX 2576) protein is Cysteine--tRNA ligase.